Consider the following 102-residue polypeptide: Ferredoxin, 2Fe-2S (102 aa).

The [2Fe-2S] cluster site is built by C11, C24, C56, and C60.

This sequence belongs to the 2Fe2S Shethna-type ferredoxin family. [2Fe-2S] cluster serves as cofactor.

In terms of biological role, ferredoxins are iron-sulfur proteins that transfer electrons in a wide variety of metabolic reactions. This is Ferredoxin, 2Fe-2S from Clostridium pasteurianum.